Consider the following 644-residue polypeptide: N-acetylgalactosaminyltransferase 4 (644 aa).

The Cytoplasmic segment spans residues 1-13; the sequence is MAIKKRYVKRLLR. A helical; Signal-anchor for type II membrane protein membrane pass occupies residues 14-34; that stretch reads KVVLLLVVIVTVSLVTTLVVE. Over 35–644 the chain is Lumenal; sequence RRMKNAAELT…MLDTFYDGLK (610 aa). Residues N157 and N179 are each glycosylated (N-linked (GlcNAc...) asparagine). The interval 177 to 288 is catalytic subdomain A; it reads LPNISVIFIF…YNWLPPLIEP (112 aa). Residues D218 and R249 each coordinate substrate. D272 is a binding site for Mn(2+). S273 provides a ligand contact to substrate. H274 is a Mn(2+) binding site. The catalytic subdomain B stretch occupies residues 345-407; the sequence is PYRSPVMMGG…PCSRVAHIFR (63 aa). A substrate-binding site is contributed by W376. H404 lines the Mn(2+) pocket. Residue R407 participates in substrate binding. Residues 496–629 enclose the Ricin B-type lectin domain; sequence AAGIIQNVAN…GNDRQRWEFG (134 aa). A disulfide bridge connects residues C509 and C526. N-linked (GlcNAc...) asparagine glycans are attached at residues N529 and N565. 2 disulfides stabilise this stretch: C556/C573 and C600/C617. N632 is a glycosylation site (N-linked (GlcNAc...) asparagine).

It belongs to the glycosyltransferase 2 family. GalNAc-T subfamily. The cofactor is Mn(2+). Expressed in developing oocytes and egg chambers. During embryonic stages 9-11, expressed in the primordium of the foregut, midgut and hindgut. During embryonic stages 12-13, shows specific expression in the proventriculus that continues until the end of embryogenesis. In third instar larvae, ubiquitously expressed in wing, eye-antennal, leg and haltere imaginal disks.

It localises to the golgi apparatus membrane. It catalyses the reaction L-seryl-[protein] + UDP-N-acetyl-alpha-D-galactosamine = a 3-O-[N-acetyl-alpha-D-galactosaminyl]-L-seryl-[protein] + UDP + H(+). It carries out the reaction L-threonyl-[protein] + UDP-N-acetyl-alpha-D-galactosamine = a 3-O-[N-acetyl-alpha-D-galactosaminyl]-L-threonyl-[protein] + UDP + H(+). Its pathway is protein modification; protein glycosylation. Its function is as follows. Glycopeptide transferase involved in O-linked oligosaccharide biosynthesis, which catalyzes the transfer of an N-acetyl-D-galactosamine residue to an already glycosylated peptide. In contrast to other proteins of the family, it does not act as a peptide transferase that transfers GalNAc onto serine or threonine residue on the protein receptor, but instead requires the prior addition of a GalNAc on a peptide before adding additional GalNAc moieties. Some peptide transferase activity is however not excluded, considering that its appropriate peptide substrate may remain unidentified. Prefers the diglycosylated Muc5AC-3/13 as substrate. The polypeptide is N-acetylgalactosaminyltransferase 4 (Drosophila melanogaster (Fruit fly)).